Here is a 280-residue protein sequence, read N- to C-terminus: Eukaryotic translation initiation factor 3 subunit F-1 (280 aa).

The 131-residue stretch at 8–138 (VRVHPVVLFQ…LRSYVCIQLG (131 aa)) folds into the MPN domain.

It belongs to the eIF-3 subunit F family. Component of the eukaryotic translation initiation factor 3 (eIF-3) complex. The eIF-3 complex interacts with pix.

It is found in the cytoplasm. Component of the eukaryotic translation initiation factor 3 (eIF-3) complex, which is involved in protein synthesis of a specialized repertoire of mRNAs and, together with other initiation factors, stimulates binding of mRNA and methionyl-tRNAi to the 40S ribosome. The eIF-3 complex specifically targets and initiates translation of a subset of mRNAs involved in cell proliferation. This Drosophila persimilis (Fruit fly) protein is Eukaryotic translation initiation factor 3 subunit F-1.